Reading from the N-terminus, the 336-residue chain is tRNA dimethylallyltransferase (336 aa).

19-26 (GPTASGKT) contributes to the ATP binding site. 21 to 26 (TASGKT) is a substrate binding site.

The protein belongs to the IPP transferase family. In terms of assembly, monomer. It depends on Mg(2+) as a cofactor.

The enzyme catalyses adenosine(37) in tRNA + dimethylallyl diphosphate = N(6)-dimethylallyladenosine(37) in tRNA + diphosphate. Functionally, catalyzes the transfer of a dimethylallyl group onto the adenine at position 37 in tRNAs that read codons beginning with uridine, leading to the formation of N6-(dimethylallyl)adenosine (i(6)A). This chain is tRNA dimethylallyltransferase, found in Bifidobacterium adolescentis (strain ATCC 15703 / DSM 20083 / NCTC 11814 / E194a).